A 757-amino-acid polypeptide reads, in one-letter code: Nitrogen fixation protein FixI (757 aa).

Residues 1–121 (MSCCASSAAI…GEEEGDDLLK (121 aa)) lie on the Cytoplasmic side of the membrane. The region spanning 37 to 107 (RQTELSVPNA…AIAERGYQTH (71 aa)) is the HMA domain. 2 residues coordinate a metal cation: C48 and C51. Residues 122 to 143 (QLILAVAVSGFAATNIMLLSVS) traverse the membrane as a helical segment. The Extracellular segment spans residues 144-158 (VWSGADAATRDLFHW). A helical transmembrane segment spans residues 159-178 (ISALIAGPALIYAGRFFYKS). Topologically, residues 179-185 (AWNAIRH) are cytoplasmic. A helical membrane pass occupies residues 186-206 (GRTNMDVPIALAVSLSYGMSL). Residues 207 to 218 (HETIGHGEHAWF) are Extracellular-facing. Residues 219–239 (DASVTLLFFLLIGRTLDHMMR) traverse the membrane as a helical segment. Residues 240–368 (GRARTAISGL…RARYRRIADR (129 aa)) lie on the Cytoplasmic side of the membrane. A helical membrane pass occupies residues 369 to 391 (AARYYSPAVHLLALLTFVGWMLV). Residues 392-398 (EGDVRHA) are Extracellular-facing. A helical membrane pass occupies residues 399–416 (MLVAVAVLIITCPCALGL). The Cytoplasmic segment spans residues 417-688 (AVPVVQVVAA…ETSRHAGQLI (272 aa)). D454 serves as the catalytic 4-aspartylphosphate intermediate. Residues D634 and D638 each contribute to the Mg(2+) site. The chain crosses the membrane as a helical span at residues 689–708 (RQNFALAIGYNVIAVPIAIL). At 709-713 (GYATP) the chain is on the extracellular side. Residues 714-732 (LVAAVAMSSSSLVVVFNAL) form a helical membrane-spanning segment. Residues 733–757 (RLKRSLAAGRGATPGTLIHSGAVTS) lie on the Cytoplasmic side of the membrane.

This sequence belongs to the cation transport ATPase (P-type) (TC 3.A.3) family. Type IB subfamily.

It is found in the cell membrane. It carries out the reaction ATP + H2O = ADP + phosphate + H(+). Its function is as follows. FixI is a pump of a specific cation involved in symbiotic nitrogen fixation. The four proteins FixG, FixH, FixI, and FixS may participate in a membrane-bound complex coupling the FixI cation pump with a redox process catalyzed by FixG. The sequence is that of Nitrogen fixation protein FixI (fixI) from Rhizobium meliloti (strain 1021) (Ensifer meliloti).